The sequence spans 262 residues: Protein N-terminal and lysine N-methyltransferase EFM7 (262 aa).

Residues W59, 86–88, D108, W143, and S171 each bind S-adenosyl-L-methionine; that span reads GAA.

It belongs to the class I-like SAM-binding methyltransferase superfamily. EFM7 family.

Its subcellular location is the cytoplasm. Functionally, S-adenosyl-L-methionine-dependent protein methyltransferase that trimethylates the N-terminal glycine 'Gly-2' of elongation factor 1-alpha, before also catalyzing the mono- and dimethylation of 'Lys-3'. The sequence is that of Protein N-terminal and lysine N-methyltransferase EFM7 from Candida albicans (strain SC5314 / ATCC MYA-2876) (Yeast).